A 1522-amino-acid chain; its full sequence is Histone-lysine N-methyltransferase EZH2 (1522 aa).

The segment at 1 to 196 is disordered; it reads MSPARGDANA…PKTPTPKNTE (196 aa). The segment covering 39–61 has biased composition (basic and acidic residues); it reads NRENLRDRDRADKLEKLEKDAHA. 2 stretches are compositionally biased toward low complexity: residues 64–76 and 103–130; these read QTQTQVQAPPVTV and RGSTSSTPTTTIPPLRPGRPSSPESPSL. Polar residues predominate over residues 141-162; the sequence is ILASRTSRFSNRTGIRDSQSPS. Residues 180–195 show a composition bias toward low complexity; that stretch reads ATSNTPAPKTPTPKNT. Residues 190-220 form an SBD domain region; that stretch reads PTPKNTEWTVDKIASALSVLAEEVPQNHSRL. An EBD domain region spans residues 221–250; that stretch reads VNFLLEETEKRAPQPRHLSKTDPFAHMKSK. Residues 251–300 are BAM domain; that stretch reads AIDANRPRPEGVPTMDVKFKQHSGEYGKSRNSGRRFQYPVVCIKPDREPV. The tract at residues 301–320 is SAL domain; that stretch reads PPYRFHHAEIRKNILALNSQ. An SRM domain region spans residues 321–360; sequence LNFVPHLRDVDPNSAEEQKYSAWLMDLENLDSKSGFKIQP. An SANT1L domain region spans residues 361–480; the sequence is RSQKIAKRAQ…PIFDNKRAKD (120 aa). Residues 406 to 426 are disordered; the sequence is PESDDSMTPQQKSNLLDTYSD. The span at 411–422 shows a compositional bias: polar residues; the sequence is SMTPQQKSNLLD. Positions 481-560 are MCSS domain; sequence APGSQKPPDE…EQRQKTEGGS (80 aa). Residues Cys-508, Cys-511, Cys-516, His-518, Cys-570, Cys-574, Cys-615, Cys-625, Cys-685, His-687, Cys-691, Cys-697, Cys-699, Cys-709, Cys-713, Cys-715, Cys-720, Cys-727, Cys-729, Cys-736, Cys-746, Cys-748, Cys-755, Cys-760, Cys-763, and Cys-784 each contribute to the Zn(2+) site. Residues 561–650 are SANT2L domain; that stretch reads ANAPPAHPPC…PVEPRTIPKQ (90 aa). The region spanning 658–780 is the CXC domain; sequence RRKKQLMSDW…PENAYDEVLH (123 aa). The SET domain occupies 795 to 919; that stretch reads KAVVLGKSQL…AGEELFFNYG (125 aa). The S-adenosyl-L-homocysteine site is built by Tyr-809, Lys-852, Ser-854, and Tyr-855. The S-adenosyl-L-methionine site is built by Tyr-809, Lys-852, Ser-854, Tyr-855, Asn-880, His-881, and Thr-926. His-881 lines the S-adenosyl-L-homocysteine pocket. S-adenosyl-L-homocysteine is bound at residue Lys-927. The interval 933 to 1522 is disordered; it reads NEQSGAETTP…KPARYRDEGE (590 aa). The segment covering 935–946 has biased composition (polar residues); the sequence is QSGAETTPQQPK. A compositionally biased stretch (acidic residues) spans 971–988; sequence GFDDDDRDGNDSDPDDLW. Over residues 992 to 1024 the composition is skewed to low complexity; sequence QQQQQQQQQQQQQQQQQQQQQQQQQQQQQQQQQ. Residues 1025–1038 show a composition bias toward polar residues; that stretch reads AQKPQPSTSHQPQS. Residues 1053-1066 show a composition bias toward basic and acidic residues; sequence SPDKQLRRENHDAQ. Residues 1072 to 1091 show a composition bias toward low complexity; the sequence is QFQQQEQQQQQQQQQQQQQQ. Polar residues predominate over residues 1127 to 1136; sequence DSSSGGSANE. Residues 1142 to 1162 show a composition bias toward basic residues; that stretch reads KPSRRGGARPGAGRKPKHRPP. Composition is skewed to basic and acidic residues over residues 1207–1221 and 1228–1238; these read SDSKDEAKEEETDKE and VNEKDREKGRD. A compositionally biased stretch (low complexity) spans 1255–1299; the sequence is KSAPSPAKKQASSPTKISDSNRTTSKNTSSNNNNNTNNNNNNNNN. Positions 1316-1330 are enriched in polar residues; it reads HLTNSQPAALSPSAT. Low complexity-rich tracts occupy residues 1355 to 1385 and 1415 to 1428; these read STMTTTTTTTTTTTSSSSSSSSSSSSSSSSS and SSSLSSSHSMSVFS. The span at 1455-1464 shows a compositional bias: polar residues; the sequence is SGLNSTSLSQ. The span at 1465–1494 shows a compositional bias: basic and acidic residues; the sequence is ERGEKHEKHEKEKPKEKKGEKERERERDRS.

Belongs to the class V-like SAM-binding methyltransferase superfamily. Histone-lysine methyltransferase family. EZ subfamily. As to quaternary structure, component of the polycomb repressive complex 2 (PRC2) that consists of four core subunits icluding EZH2, EED, SUZ12, and RBBP4, among which EZH2 is the catalytic subunit and which minimally requires EED and SUZ12 for catalysis.

It is found in the nucleus. The enzyme catalyses L-lysyl(27)-[histone H3] + 3 S-adenosyl-L-methionine = N(6),N(6),N(6)-trimethyl-L-lysyl(27)-[histone H3] + 3 S-adenosyl-L-homocysteine + 3 H(+). With respect to regulation, the end product of PRC2 catalysis, H3K27me3, interacts with EED to stimulate the enzymatic activity of PRC2 allosterically. The enzymatic activity of PRC2 is regulated in a very complex manner and PCR2 can adopt different stages including the autoinhibited (A); SAM-bound autoinhibited (A'), basal (B), and H3K27me3-stimulated (S) stages. Actictivity is inhibited by pyridone inhibitors such as GSK126. Catalytic subunit of the of the Polycomb Repressive Complex 2 (PRC2), a histone H3 lysine methyltransferase responsible for generating mono-, di-, and tri-methylation on Lys27 (H3K27me1, H3K27me2 and H3K27me3). The tri-methylated form is known to be critical in gene repression, and its proper placement is essential in defining repression patterns during development. The PRC2 complex interacts with thousands of RNA species in vivo, but the physiological function of RNA binding has still to be determined. The chain is Histone-lysine N-methyltransferase EZH2 from Chaetomium thermophilum (strain DSM 1495 / CBS 144.50 / IMI 039719) (Thermochaetoides thermophila).